We begin with the raw amino-acid sequence, 580 residues long: Putative multidrug export ATP-binding/permease protein YgaD (580 aa).

Over 1–17 (MGVMKRYMQFVKPYKKQ) the chain is Cytoplasmic. The chain crosses the membrane as a helical span at residues 18-38 (IFVTVLIGIVKFSIPLALPLL). An ABC transmembrane type-1 domain is found at 19 to 307 (FVTVLIGIVK…LINSSTTLTQ (289 aa)). Residues 39-57 (LKYVVDDIIQGGGTASDKT) are Extracellular-facing. A helical transmembrane segment spans residues 58–78 (TSLFTIMAIMFALFLILRPPV). At 79-135 (EYYRQYFAQWTASKVLYDIRAKLFDHIQKLSLRFYANTRTGEVISRVINDVEQTKDF) the chain is on the cytoplasmic side. A helical membrane pass occupies residues 136–156 (VITGLMNIWLDMLTILIVISI). The Extracellular portion of the chain corresponds to 157–163 (MLTLDVK). Residues 164-184 (LTLISIVLFPLYGISVKYFYG) traverse the membrane as a helical segment. The Cytoplasmic segment spans residues 185 to 243 (RLRKLTRERSQALAQVQGHLHERIQGMPVIRSFAIEDHEQAQFNEKNGHFLDKAIRHTN). Residues 244 to 263 (WNAKTFAVVNTITDLAPLIV) form a helical membrane-spanning segment. Topologically, residues 264–268 (IACAG) are extracellular. The helical transmembrane segment at 269-288 (YFVINGPLTVGTMVAFVGYI) threads the bilayer. Residues 289–580 (DRMYNPVRRL…KHLFTIQNLN (292 aa)) lie on the Cytoplasmic side of the membrane. The region spanning 341–576 (VEFQNVSFQY…ESQYKHLFTI (236 aa)) is the ABC transporter domain. 375-382 (GMSGGGKS) contacts ATP.

This sequence belongs to the ABC transporter superfamily. Homodimer.

It is found in the cell membrane. Functionally, may be involved in multidrug export. Transmembrane domains (TMD) form a pore in the cell membrane and the ATP-binding domain (NBD) is responsible for energy generation. The polypeptide is Putative multidrug export ATP-binding/permease protein YgaD (ygaD) (Bacillus subtilis (strain 168)).